A 122-amino-acid polypeptide reads, in one-letter code: MSTLSRKQQTQKRHRRLRRHLSGTANRPRLAVFRSNSHIYAQLIDDEAQSTLCSASTLDKDLRSSLKTNCSSCDASVAVGDLVAKRAIAKGIQQVVFDRGGNLYHGRVKALADAAREAGLQF.

The interval M1–A25 is disordered. A compositionally biased stretch (basic residues) spans Q9 to L21.

This sequence belongs to the universal ribosomal protein uL18 family. As to quaternary structure, part of the 50S ribosomal subunit; part of the 5S rRNA/L5/L18/L25 subcomplex. Contacts the 5S and 23S rRNAs.

This is one of the proteins that bind and probably mediate the attachment of the 5S RNA into the large ribosomal subunit, where it forms part of the central protuberance. This chain is Large ribosomal subunit protein uL18, found in Synechococcus sp. (strain CC9311).